A 292-amino-acid polypeptide reads, in one-letter code: MAVSLNDIKTKIASTKNTSQITNAMQMVSAAKLGRSEEAARNFQVYAQKVRKLLTDILHGNGAGASTNPMLISRSVKKTGYIVITSDRGLVGGYNSSILKAVMELKEEYHPDGKGFEMICIGGMGADFFKARGIQPLYELRGLADQPSFDQVRKIISKTVEMYQNELFDELYVCYNHHVNTLTSQMRVEQMLPIVDLDPNEADEEYSLTFELETSREEILEQLLPQFAESMIYGAIIDAKTAENAAGMTAMQTATDNAKKVINDLTIQYNRARQAAITQEITEIVAGASALE.

The protein belongs to the ATPase gamma chain family. F-type ATPases have 2 components, CF(1) - the catalytic core - and CF(0) - the membrane proton channel. CF(1) has five subunits: alpha(3), beta(3), gamma(1), delta(1), epsilon(1). CF(0) has three main subunits: a, b and c.

The protein resides in the cell membrane. Produces ATP from ADP in the presence of a proton gradient across the membrane. The gamma chain is believed to be important in regulating ATPase activity and the flow of protons through the CF(0) complex. The sequence is that of ATP synthase gamma chain from Streptococcus pneumoniae (strain JJA).